Consider the following 458-residue polypeptide: Ribulose bisphosphate carboxylase (458 aa).

Substrate is bound at residue N111. The active-site Proton acceptor is the K166. Residue K168 coordinates substrate. Mg(2+) contacts are provided by K191, D193, and E194. K191 bears the N6-carboxylysine mark. H287 functions as the Proton acceptor in the catalytic mechanism. Substrate is bound by residues R288, H321, and S368.

Belongs to the RuBisCO large chain family. Type II subfamily. In terms of assembly, homodimer. The cofactor is Mg(2+).

The enzyme catalyses 2 (2R)-3-phosphoglycerate + 2 H(+) = D-ribulose 1,5-bisphosphate + CO2 + H2O. It carries out the reaction D-ribulose 1,5-bisphosphate + O2 = 2-phosphoglycolate + (2R)-3-phosphoglycerate + 2 H(+). Its function is as follows. RuBisCO catalyzes two reactions: the carboxylation of D-ribulose 1,5-bisphosphate, the primary event in carbon dioxide fixation, as well as the oxidative fragmentation of the pentose substrate. Both reactions occur simultaneously and in competition at the same active site. This is Ribulose bisphosphate carboxylase (cbbM) from Rhodobacter capsulatus (strain ATCC BAA-309 / NBRC 16581 / SB1003).